The sequence spans 141 residues: Protein NrdI (141 aa).

Belongs to the NrdI family.

In terms of biological role, probably involved in ribonucleotide reductase function. The chain is Protein NrdI from Bifidobacterium animalis subsp. lactis (strain AD011).